Here is a 215-residue protein sequence, read N- to C-terminus: Cytochrome b6 (215 aa).

A helical membrane pass occupies residues 32–52 (IFYCLGGITLTCFLVQVATGF). C35 contacts heme c. Heme b contacts are provided by H86 and H100. The next 3 membrane-spanning stretches (helical) occupy residues 90 to 110 (ASMM…TGGF), 116 to 136 (LTWI…VTGY), and 186 to 206 (LHTF…FLMI). The heme b site is built by H187 and H202.

The protein belongs to the cytochrome b family. PetB subfamily. In terms of assembly, the 4 large subunits of the cytochrome b6-f complex are cytochrome b6, subunit IV (17 kDa polypeptide, PetD), cytochrome f and the Rieske protein, while the 4 small subunits are PetG, PetL, PetM and PetN. The complex functions as a dimer. The cofactor is heme b. It depends on heme c as a cofactor.

Its subcellular location is the plastid. It localises to the chloroplast thylakoid membrane. In terms of biological role, component of the cytochrome b6-f complex, which mediates electron transfer between photosystem II (PSII) and photosystem I (PSI), cyclic electron flow around PSI, and state transitions. The polypeptide is Cytochrome b6 (Psilotum nudum (Whisk fern)).